A 260-amino-acid polypeptide reads, in one-letter code: DNA repair protein RecO (260 aa).

This sequence belongs to the RecO family.

Its function is as follows. Involved in DNA repair and RecF pathway recombination. In Levilactobacillus brevis (strain ATCC 367 / BCRC 12310 / CIP 105137 / JCM 1170 / LMG 11437 / NCIMB 947 / NCTC 947) (Lactobacillus brevis), this protein is DNA repair protein RecO.